Consider the following 276-residue polypeptide: MSELWYTEKQTKNFGITMKVNKTLHTEQTEFQHLEMVETEEFGNMLFLDGMVMTSEKDEFVYHEMVAHVPLFTHPNPEHVLVVGGGDGGVIREILKHPSVKKATLVDIDGKVIEYSKKFLPSIAGKLDDPRVDVQVDDGFMHIAKSENQYDVIMVDSTEPVGPAVNLFTKGFYAGIAKALKEDGIFVAQTDNPWFTPELITNVQRDVKEIFPITKLYTANIPTYPSGLWTFTIGSKKYDPLAVEDSRFFDIETKYYTKDIHKAAFVLPKFVSDLIK.

A PABS domain is found at 3 to 236 (ELWYTEKQTK…GLWTFTIGSK (234 aa)). Gln32 contacts S-methyl-5'-thioadenosine. Residues His63 and Asp87 each contribute to the spermidine site. Residues Asp107 and 138 to 139 (DG) each bind S-methyl-5'-thioadenosine. Asp156 (proton acceptor) is an active-site residue. 156–159 (DSTE) serves as a coordination point for spermidine. Pro163 lines the S-methyl-5'-thioadenosine pocket.

Belongs to the spermidine/spermine synthase family. As to quaternary structure, homodimer or homotetramer.

Its subcellular location is the cytoplasm. The catalysed reaction is S-adenosyl 3-(methylsulfanyl)propylamine + putrescine = S-methyl-5'-thioadenosine + spermidine + H(+). It functions in the pathway amine and polyamine biosynthesis; spermidine biosynthesis; spermidine from putrescine: step 1/1. Functionally, involved in the cell growth and proliferation. Catalyzes the irreversible transfer of a propylamine group from the amino donor S-adenosylmethioninamine (decarboxy-AdoMet) to putrescine (1,4-diaminobutane) to yield spermidine. In Bacillus subtilis (strain 168), this protein is Polyamine aminopropyltransferase.